A 532-amino-acid chain; its full sequence is MSSDSGPLHRRTIPISVHIFSGFFYAPFYAPQLTQFIVTITMYSTYQRPAGYQPRQQPQGEEDRRPAHRRTVDHGSAFGKWHLDRLSGRTIQPANMRSEQSYIVDLLPPSAYTNINGSLRSTNPHITSVAATPAKFIQVALNKVRHPVYSATWTPDGRRLLTGSMSGEFTLWNGMTFNFESIMQAHESGVRSLKYSHSGEWLLSGDHEGNVKFWQPSLNCVNVIDKAHRESIRELAFAPSDHKFVTGSDDGLLKIWDFHESSNAESVLKGHGWDVKSVDWHSELGLIVSGSKDNLIKLWDPRSAKNVNTFHGFKNTVMKTTFQPTGTKRLLAAGCRDRTCRILDLRMLNSGSSEAGPTAGTDMPTRGDRSMAVLRGHDSDVFSLTWHPTHANVVTSGTKTGSIYTFNVDTTPAGGAYGPDSGILPVNTIPSAHDYCVSTLDYHPEGHVLCSGGLDRMTRFWARPRPGDPTSFRDKYYEPKEEGVSVKTLPGVNNATSRAGMARVEHVSTQHFNTAQPEVTDDEPVSIPGFAR.

The interval 50-72 (AGYQPRQQPQGEEDRRPAHRRTV) is disordered. Basic and acidic residues predominate over residues 61–72 (EEDRRPAHRRTV). WD repeat units lie at residues 143–182 (KVRH…FESI), 185–224 (AHES…VNVI), 227–266 (AHRE…NAES), 270–309 (GHGW…NVNT), 312–353 (GFKN…SGSS), 376–416 (GHDS…AGGA), and 432–471 (AHDY…DPTS). The interval 513–532 (NTAQPEVTDDEPVSIPGFAR) is disordered.

Its subcellular location is the nucleus. Required for 3'-end cleavage and polyadenylation of pre-mRNAs. Also involved in chromosome segregation where it has a role in chromosome attachment to the mitotic spindle. This Yarrowia lipolytica (strain CLIB 122 / E 150) (Yeast) protein is Polyadenylation factor subunit 2 (PFS2).